A 204-amino-acid chain; its full sequence is Protein OPG030 (204 aa).

The BACK domain maps to 95-177 (FLRQYINNNI…ITYSELTNAI (83 aa)).

It belongs to the orthopoxvirus OPG030 family.

The polypeptide is Protein OPG030 (OPG30) (Bos taurus (Bovine)).